We begin with the raw amino-acid sequence, 34 residues long: Cycloamanide B proprotein (34 aa).

Positions 1–10 (MSDINAARLP) are excised as a propeptide. The cyclopeptide (Ser-Pro) cross-link spans 11-17 (SFFFPIP). Residues 18-34 (CISDDIEMVLTRGESLC) constitute a propeptide that is removed on maturation.

Belongs to the MSDIN fungal toxin family. In terms of processing, processed by the macrocyclase-peptidase enzyme POPB to yield a cyclic decapeptide. POPB first removes 10 residues from the N-terminus. Conformational trapping of the remaining peptide forces the enzyme to release this intermediate rather than proceed to macrocyclization. The enzyme rebinds the remaining peptide in a different conformation and catalyzes macrocyclization of the N-terminal 7 residues.

Functionally, cyclic heptapeptide that belongs to the MSDIN-like toxin family responsible for a large number of food poisoning cases and deaths. Cycloaminide B is non-toxic to mammals but shows immunosuppressive activity, probably through the inhibition of the action of interleukin-1 and interleukin-2. The sequence is that of Cycloamanide B proprotein from Amanita phalloides (Death cap).